An 85-amino-acid chain; its full sequence is Large ribosomal subunit protein bL27 (85 aa).

It belongs to the bacterial ribosomal protein bL27 family.

The protein is Large ribosomal subunit protein bL27 of Sodalis glossinidius (strain morsitans).